The sequence spans 523 residues: Inosine-5'-monophosphate dehydrogenase 2 (523 aa).

CBS domains follow at residues 121-183 (FINN…VQDV) and 184-240 (MTKN…PLAS). NAD(+) contacts are provided by residues 278-280 (DSS) and 328-330 (GMG). K(+) contacts are provided by glycine 330 and glycine 332. Serine 333 serves as a coordination point for IMP. Cysteine 335 lines the K(+) pocket. Cysteine 335 functions as the Thioimidate intermediate in the catalytic mechanism. Residues 368 to 370 (DGG), 391 to 392 (GG), and 415 to 419 (YRGMG) contribute to the IMP site. Arginine 437 functions as the Proton acceptor in the catalytic mechanism. Glutamine 449 serves as a coordination point for IMP. Positions 508, 509, and 510 each coordinate K(+).

Belongs to the IMPDH/GMPR family. In terms of assembly, homotetramer. Seems to be able to form heterotetramers composed from more than 1 of the 3 IMPDH gene products (IMD2-4). It depends on K(+) as a cofactor.

The protein resides in the cytoplasm. It carries out the reaction IMP + NAD(+) + H2O = XMP + NADH + H(+). Its pathway is purine metabolism; XMP biosynthesis via de novo pathway; XMP from IMP: step 1/1. Mycophenolic acid (MPA) is a non-competitive inhibitor that prevents formation of the closed enzyme conformation by binding to the same site as the amobile flap. In contrast, mizoribine monophosphate (MZP) is a competitive inhibitor that induces the closed conformation. MPA is a potent inhibitor of mammalian IMPDHs but a poor inhibitor of the bacterial enzymes. MZP is a more potent inhibitor of bacterial IMPDH. Catalyzes the conversion of inosine 5'-phosphate (IMP) to xanthosine 5'-phosphate (XMP), the first committed and rate-limiting step in the de novo synthesis of guanine nucleotides, and therefore plays an important role in the regulation of cell growth. In contrast to the other IMPDH alleles IMD3 and IMD4, the enzymatic activity of IMD2 seems to be intrinsically drug resistant. This is Inosine-5'-monophosphate dehydrogenase 2 from Saccharomyces cerevisiae (strain ATCC 204508 / S288c) (Baker's yeast).